The following is a 555-amino-acid chain: Phosphomethylpyrimidine synthase (555 aa).

Substrate is bound by residues asparagine 191, methionine 220, tyrosine 249, histidine 285, 305-307, 346-349, and glutamate 385; these read SRG and DGLR. Histidine 389 is a Zn(2+) binding site. Tyrosine 412 contacts substrate. Position 453 (histidine 453) interacts with Zn(2+). [4Fe-4S] cluster is bound by residues cysteine 533, cysteine 536, and cysteine 541.

It belongs to the ThiC family. As to quaternary structure, homodimer. It depends on [4Fe-4S] cluster as a cofactor.

The enzyme catalyses 5-amino-1-(5-phospho-beta-D-ribosyl)imidazole + S-adenosyl-L-methionine = 4-amino-2-methyl-5-(phosphooxymethyl)pyrimidine + CO + 5'-deoxyadenosine + formate + L-methionine + 3 H(+). It functions in the pathway cofactor biosynthesis; thiamine diphosphate biosynthesis. Its function is as follows. Catalyzes the synthesis of the hydroxymethylpyrimidine phosphate (HMP-P) moiety of thiamine from aminoimidazole ribotide (AIR) in a radical S-adenosyl-L-methionine (SAM)-dependent reaction. The sequence is that of Phosphomethylpyrimidine synthase from Ehrlichia ruminantium (strain Gardel).